The sequence spans 69 residues: Small ribosomal subunit protein bS21 (69 aa).

This sequence belongs to the bacterial ribosomal protein bS21 family.

The chain is Small ribosomal subunit protein bS21 from Hyphomonas neptunium (strain ATCC 15444).